The primary structure comprises 328 residues: Coiled-coil domain-containing protein 54 (328 aa).

Residues lysine 93–serine 148 adopt a coiled-coil conformation. Position 182 is a phosphothreonine (threonine 182).

This is Coiled-coil domain-containing protein 54 (CCDC54) from Bos taurus (Bovine).